Consider the following 294-residue polypeptide: 4-diphosphocytidyl-2-C-methyl-D-erythritol kinase (294 aa).

The active site involves Lys16. 99–109 is an ATP binding site; sequence PMGAGLGGGSS. Asp141 is a catalytic residue.

This sequence belongs to the GHMP kinase family. IspE subfamily.

It catalyses the reaction 4-CDP-2-C-methyl-D-erythritol + ATP = 4-CDP-2-C-methyl-D-erythritol 2-phosphate + ADP + H(+). It functions in the pathway isoprenoid biosynthesis; isopentenyl diphosphate biosynthesis via DXP pathway; isopentenyl diphosphate from 1-deoxy-D-xylulose 5-phosphate: step 3/6. Its function is as follows. Catalyzes the phosphorylation of the position 2 hydroxy group of 4-diphosphocytidyl-2C-methyl-D-erythritol. In Polynucleobacter asymbioticus (strain DSM 18221 / CIP 109841 / QLW-P1DMWA-1) (Polynucleobacter necessarius subsp. asymbioticus), this protein is 4-diphosphocytidyl-2-C-methyl-D-erythritol kinase.